The chain runs to 382 residues: D-galactonate dehydratase (382 aa).

Position 183 (Asp-183) interacts with Mg(2+). His-185 (proton donor) is an active-site residue. Mg(2+) is bound by residues Glu-209 and Glu-235. Residue His-285 is the Proton acceptor of the active site.

The protein belongs to the mandelate racemase/muconate lactonizing enzyme family. GalD subfamily. Mg(2+) serves as cofactor.

It carries out the reaction D-galactonate = 2-dehydro-3-deoxy-D-galactonate + H2O. It functions in the pathway carbohydrate acid metabolism; D-galactonate degradation; D-glyceraldehyde 3-phosphate and pyruvate from D-galactonate: step 1/3. Catalyzes the dehydration of D-galactonate to 2-keto-3-deoxy-D-galactonate. This Escherichia coli (strain UTI89 / UPEC) protein is D-galactonate dehydratase.